Consider the following 422-residue polypeptide: UDP-N-acetylglucosamine 1-carboxyvinyltransferase (422 aa).

22-23 (KN) is a binding site for phosphoenolpyruvate. Arginine 94 is a binding site for UDP-N-acetyl-alpha-D-glucosamine. Residue cysteine 118 is the Proton donor of the active site. A 2-(S-cysteinyl)pyruvic acid O-phosphothioketal modification is found at cysteine 118. UDP-N-acetyl-alpha-D-glucosamine contacts are provided by residues 123 to 127 (RPIDL), aspartate 309, and leucine 331.

The protein belongs to the EPSP synthase family. MurA subfamily.

It localises to the cytoplasm. The enzyme catalyses phosphoenolpyruvate + UDP-N-acetyl-alpha-D-glucosamine = UDP-N-acetyl-3-O-(1-carboxyvinyl)-alpha-D-glucosamine + phosphate. It functions in the pathway cell wall biogenesis; peptidoglycan biosynthesis. Functionally, cell wall formation. Adds enolpyruvyl to UDP-N-acetylglucosamine. The chain is UDP-N-acetylglucosamine 1-carboxyvinyltransferase from Sulfurimonas denitrificans (strain ATCC 33889 / DSM 1251) (Thiomicrospira denitrificans (strain ATCC 33889 / DSM 1251)).